Here is a 272-residue protein sequence, read N- to C-terminus: Transcription factor E2F6 (272 aa).

A binding to corepressors region spans residues Met-1 to Pro-62. The DNA-binding element occupies Tyr-50–Ser-129. The short motif at Lys-95 to Ser-129 is the DEF box element. The segment at Asp-130–Val-222 is dimerization. A leucine-zipper region spans residues Leu-143–Cys-164. The transcription repression stretch occupies residues Asp-173–Gln-272. Residues His-242–Gln-272 form a disordered region.

This sequence belongs to the E2F/DP family. In terms of assembly, forms heterodimers with DP family members TFDP1 or TFDP2. Component of the DRTF1/E2F transcription factor complex. Part of the E2F6.com-1 complex in G0 phase composed of E2F6, MGA, MAX, TFDP1, CBX3, BAT8, EUHMTASE1, RING1, RNF2, MBLR, L3MBTL2 and YAF2. Component of some MLL1/MLL complex, at least composed of the core components KMT2A/MLL1, ASH2L, HCFC1/HCF1, WDR5 and RBBP5, as well as the facultative components BACC1, CHD8, E2F6, HSP70, INO80C, KANSL1, LAS1L, MAX, MCRS1, MGA, KAT8/MOF, PELP1, PHF20, PRP31, RING2, RUVB1/TIP49A, RUVB2/TIP49B, SENP3, TAF1, TAF4, TAF6, TAF7, TAF9 and TEX10.

Its subcellular location is the nucleus. Inhibitor of E2F-dependent transcription. Binds DNA cooperatively with DP proteins through the E2 recognition site, 5'-TTTC[CG]CGC-3'. Has a preference for the 5'-TTTCCCGC-3' E2F recognition site. E2F6 lacks the transcriptional activation and pocket protein binding domains. Appears to regulate a subset of E2F-dependent genes whose products are required for entry into the cell cycle but not for normal cell cycle progression. Represses expression of some meiosis-specific genes, including SLC25A31/ANT4. May silence expression via the recruitment of a chromatin remodeling complex containing histone H3-K9 methyltransferase activity. Overexpression delays the exit of cells from the S-phase. In Mus musculus (Mouse), this protein is Transcription factor E2F6.